We begin with the raw amino-acid sequence, 486 residues long: ATP-dependent rRNA helicase RRP3 (486 aa).

The tract at residues 1–58 (MNGAKRRKVAQDTPRNTKPVAQEKPARAEPKPSSDEESEEESATLEEPSAEETAVDAP) is disordered. The segment covering 24-34 (KPARAEPKPSS) has biased composition (basic and acidic residues). Residues 35-54 (DEESEEESATLEEPSAEETA) show a composition bias toward acidic residues. A Q motif motif is present at residues 60-88 (KTFKDLGVNDALCEACEKLNYKYPTPIQE). One can recognise a Helicase ATP-binding domain in the interval 91-262 (IPVALQGRDI…RASLRDPVKV (172 aa)). 104 to 111 (AETGSGKT) serves as a coordination point for ATP. The short motif at 210–213 (DEAD) is the DEAD box element. Positions 286 to 434 (QKDVHLIYLI…EYPTEKEEVM (149 aa)) constitute a Helicase C-terminal domain. Composition is skewed to basic and acidic residues over residues 451–460 (MKSFTEERGK) and 476–486 (RGRDDMDREEG). The tract at residues 451–486 (MKSFTEERGKKGSTLKGGRGKKGGKRGRDDMDREEG) is disordered.

Belongs to the DEAD box helicase family. DDX47/RRP3 subfamily. Interacts with the SSU processome.

It is found in the nucleus. The catalysed reaction is ATP + H2O = ADP + phosphate + H(+). Functionally, ATP-dependent rRNA helicase required for pre-ribosomal RNA processing. Involved in the maturation of the 35S-pre-rRNA and to its cleavage to mature 18S rRNA. The sequence is that of ATP-dependent rRNA helicase RRP3 from Gibberella zeae (strain ATCC MYA-4620 / CBS 123657 / FGSC 9075 / NRRL 31084 / PH-1) (Wheat head blight fungus).